A 1168-amino-acid polypeptide reads, in one-letter code: Transcription-repair-coupling factor (1168 aa).

The region spanning 633-794 is the Helicase ATP-binding domain; that stretch reads DMQKSRPMDR…MLGVRDLSVI (162 aa). Position 646–653 (646–653) interacts with ATP; the sequence is GDVGYGKT. The short motif at 747–750 is the DEEQ box element; it reads DEEQ. Residues 808–969 form the Helicase C-terminal domain; sequence VLEQNMSFIK…GFKIAMRDLN (162 aa).

This sequence in the N-terminal section; belongs to the UvrB family. In the C-terminal section; belongs to the helicase family. RecG subfamily.

The protein resides in the cytoplasm. Its function is as follows. Couples transcription and DNA repair by recognizing RNA polymerase (RNAP) stalled at DNA lesions. Mediates ATP-dependent release of RNAP and its truncated transcript from the DNA, and recruitment of nucleotide excision repair machinery to the damaged site. The sequence is that of Transcription-repair-coupling factor from Staphylococcus aureus (strain MSSA476).